The following is a 397-amino-acid chain: Cathepsin E (397 aa).

Positions 1–16 are cleaved as a signal peptide; that stretch reads MKQFLVVLLILSFVHG. The propeptide at 17-49 is activation peptide; sequence IIRVPLKRQKSMRKILKEKGKLSHLWTKQGNEF. Residues 74–385 enclose the Peptidase A1 domain; it reads YFGQISIGTP…DRGNNRVGFA (312 aa). Residue aspartate 92 is part of the active site. A disulfide bond links cysteine 105 and cysteine 110. N-linked (GlcNAc...) asparagine glycosylation is present at asparagine 139. Cysteine 268 and cysteine 272 are joined by a disulfide. The active site involves aspartate 277. Cysteine 310 and cysteine 344 are disulfide-bonded.

The protein belongs to the peptidase A1 family. As to quaternary structure, homodimer; disulfide-linked. Post-translationally, glycosylated. Contains high mannose-type oligosaccharide. Found in the larval foregut and adult stomach.

Its subcellular location is the endosome. It carries out the reaction Similar to cathepsin D, but slightly broader specificity.. May have a role in immune function. Probably involved in the processing of antigenic peptides during MHC class II-mediated antigen presentation. The protein is Cathepsin E (CTSE) of Aquarana catesbeiana (American bullfrog).